We begin with the raw amino-acid sequence, 1027 residues long: Kinesin heavy chain isoform 5A (1027 aa).

Ala2 carries the N-acetylalanine modification. A Kinesin motor domain is found at Ser9–Ile327. Gly86 to Thr93 serves as a coordination point for ATP. Residues Val174–Lys315 are microtubule-binding. The segment at Glu271–Ala361 is necessary for interaction with ZFYVE27. Residues Ala331–Tyr906 are a coiled coil. An interaction with BICD2 region spans residues Thr353 to Ser1027. Thr397 bears the Phosphothreonine mark. The segment at Tyr906 to Gly937 is disordered. Residues Lys907–Ser1027 are globular.

Belongs to the TRAFAC class myosin-kinesin ATPase superfamily. Kinesin family. Kinesin subfamily. In terms of assembly, oligomer composed of two heavy chains and two light chains. Interacts with GRIP1. Interacts with FMR1 (via C-terminus); this interaction is increased in a mGluR-dependent manner. Interacts with BORCS5. Interacts with ZFYVE27. Interacts with VAPA, VAPB, SURF4, RAB11A (GDP-bound form), RAB11B (GDP-bound form) and RTN3 in a ZFYVE27-dependent manner. Interacts with BICD2. Interacts with DTNB.

It localises to the cytoplasm. The protein resides in the perinuclear region. It is found in the cytoskeleton. The protein localises to the perikaryon. It catalyses the reaction ATP + H2O + a kinesin associated with a microtubule at position (n) = ADP + phosphate a kinesin associated with a microtubule at position (n+1, toward the plus end).. In terms of biological role, microtubule-dependent motor required for slow axonal transport of neurofilament proteins (NFH, NFM and NFL). Can induce formation of neurite-like membrane protrusions in non-neuronal cells in a ZFYVE27-dependent manner. The ZFYVE27-KIF5A complex contributes to the vesicular transport of VAPA, VAPB, SURF4, RAB11A, RAB11B and RTN3 proteins in neurons. Required for anterograde axonal transportation of MAPK8IP3/JIP3 which is essential for MAPK8IP3/JIP3 function in axon elongation. This chain is Kinesin heavy chain isoform 5A (Kif5a), found in Mus musculus (Mouse).